The following is a 499-amino-acid chain: Sialic acid-binding Ig-like lectin 8 (499 aa).

The N-terminal stretch at 1-16 is a signal peptide; sequence MLLLLLLLPLLWGTKG. Residues 17–363 lie on the Extracellular side of the membrane; sequence MEGDRQYGDG…RPVSQVTLAA (347 aa). A carbohydrate is bound by residues tyrosine 23, 72–75, arginine 125, and 134–138; these read RPYQ and SYKSQ. In terms of domain architecture, Ig-like V-type spans 40-123; the sequence is GLCVHVPCSF…ARKRDKGSYF (84 aa). 3 cysteine pairs are disulfide-bonded: cysteine 42-cysteine 181, cysteine 47-cysteine 107, and cysteine 175-cysteine 224. 2 consecutive Ig-like C2-type domains span residues 157 to 240 and 246 to 344; these read PDIL…STVR and PPWN…LSLS. Asparagine 172 is a glycosylation site (N-linked (GlcNAc...) asparagine). Residues asparagine 249 and asparagine 267 are each glycosylated (N-linked (GlcNAc...) asparagine). Cysteines 283 and 328 form a disulfide. The helical transmembrane segment at 364–384 threads the bilayer; sequence VGGAGATALAFLSFCIIFIIV. At 385–499 the chain is on the cytoplasmic side; sequence RSCRKKSARP…HNPSSKEVRG (115 aa). A disordered region spans residues 410-443; it reads RGSASQGPLTESWKDGNPLKKPPPAVAPSSGEEG. An ITIM motif motif is present at residues 445–450; that stretch reads LHYATL. 2 disordered regions span residues 451-470 and 478-499; these read SFHKVKPQDPQGQEATDSEY and RETAETQACLRNHNPSSKEVRG. Positions 468–473 match the SLAM-like motif motif; the sequence is SEYSEI.

Belongs to the immunoglobulin superfamily. SIGLEC (sialic acid binding Ig-like lectin) family. As to expression, expressed specifically on blood cells namely basophil, mast cells and eosinophils.

It is found in the membrane. Its function is as follows. Putative adhesion molecule that mediates sialic-acid dependent binding to blood cells. Preferentially binds to alpha-2,3-linked sialic acid. Also binds to alpha-2,6-linked sialic acid. The sialic acid recognition site may be masked by cis interactions with sialic acids on the same cell surface. Recognizes simultaneously epitopes having a terminal N-acetylneuraminic acid (sialic acid) and an underlying 6-O-sulfated galactose. Preferentially binds to Gal-6-sulfated sialyl-Lewis X glycan epitopes. The chain is Sialic acid-binding Ig-like lectin 8 (SIGLEC8) from Homo sapiens (Human).